The primary structure comprises 1162 residues: Protein OBERON 4 (1162 aa).

4 stretches are compositionally biased toward basic and acidic residues: residues 1–19 (MKRLRSSDDLDFCNDKNVD), 61–77 (NRDLDNHRPDARYHRSE), 90–99 (FRSERERPNR), and 118–134 (VDDRDRRLRDAERDRSL). Disordered regions lie at residues 1–235 (MKRL…PSCS), 251–307 (IGKS…VSQN), 321–346 (DHRDGTITASANKITDTVDEKGDKDE), and 441–485 (SKTE…QSGV). Positions 135–146 (KSPSWSRDSPNE) are enriched in polar residues. Over residues 148-157 (SKFKPLDSRN) the composition is skewed to basic and acidic residues. The segment covering 163-182 (KSLASPTWSKDSGSEQSKSV) has biased composition (polar residues). A compositionally biased stretch (acidic residues) spans 203–213 (EMEEGELEPEP). Basic and acidic residues-rich tracts occupy residues 225-235 (TKHDCKLPSCS), 263-300 (SNRELSHVGGNREMETTDSMTDKKSVEDAENVPEHATE), 336-346 (DTVDEKGDKDE), and 441-457 (SKTEDLHDKDKDEKDDN). The PHD-type zinc-finger motif lies at 835 to 899 (ACMCLVCSNF…QFHCVACNHP (65 aa)). Residues 1065 to 1161 (MKQAEAEMFQ…KMEMTKQSLA (97 aa)) are a coiled coil.

In terms of assembly, self-interacts. Interacts with OBE1 and OBE2. Interacts with OBE3.

It is found in the nucleus. In terms of biological role, probable transcription factor that functions redundantly with OBE3 in specification of the hypophysis and establishment of the embryonic root. Involved in the activation of ARF5/MP-dependent gene expression during embryonic root meristem initiation. Involved in shoot meristem homeostasis. This is Protein OBERON 4 from Arabidopsis thaliana (Mouse-ear cress).